We begin with the raw amino-acid sequence, 230 residues long: Large ribosomal subunit protein uL1 (230 aa).

It belongs to the universal ribosomal protein uL1 family. Part of the 50S ribosomal subunit.

Its function is as follows. Binds directly to 23S rRNA. The L1 stalk is quite mobile in the ribosome, and is involved in E site tRNA release. Functionally, protein L1 is also a translational repressor protein, it controls the translation of the L11 operon by binding to its mRNA. The chain is Large ribosomal subunit protein uL1 from Nitrobacter hamburgensis (strain DSM 10229 / NCIMB 13809 / X14).